The primary structure comprises 166 residues: MSTVELNTSAGRIVLELNDAEAPKTVENFLAYVRSGHYDGTIFHRVISDFMIQGGGFTPDMQQKSTLAPIQNEADNGLRNDNYTVAMARTNDPHSATAQFFINVKDNAFLNHTSKTPNGWGYAVFGRVTEGQDVVDAIKGVKTGSSRGHQDVPVQPVVIESAKILG.

The PPIase cyclophilin-type domain occupies 2-164 (STVELNTSAG…QPVVIESAKI (163 aa)).

It belongs to the cyclophilin-type PPIase family. As to quaternary structure, monomer.

It is found in the cytoplasm. It carries out the reaction [protein]-peptidylproline (omega=180) = [protein]-peptidylproline (omega=0). Inhibition by cyclosporin A with a Ki of 21 mu-mol. Functionally, PPIases accelerate the folding of proteins. It catalyzes the cis-trans isomerization of proline imidic peptide bonds in oligopeptides. The protein is Peptidyl-prolyl cis-trans isomerase cyp18 of Streptomyces antibioticus.